Consider the following 605-residue polypeptide: Insulin-like growth factor-binding protein complex acid labile subunit (605 aa).

A signal peptide spans 1-27; sequence MALRKGGLALALLLLSWVALGPRSLEG. The LRRNT domain maps to 32–74; the sequence is TPGEAEGPACPATCACSYDDEVNELSVFCSSRNLTRLPDGIPG. 2 cysteine pairs are disulfide-bonded: Cys-41–Cys-47 and Cys-45–Cys-60. N-linked (GlcNAc...) asparagine glycosylation is found at Asn-64, Asn-85, and Asn-96. LRR repeat units lie at residues 75–96, 99–120, 123–144, 147–168, 171–192, 195–216, 219–240, 243–264, 267–288, 291–312, 315–336, 339–360, 363–384, 387–408, 411–432, 435–456, 459–480, 483–504, and 507–528; these read GTQA…AFRN, SLAF…ALLG, NLCH…TFAY, ALAL…LFEG, NLWD…AFRG, GLRE…LFSG, ELRE…VFAQ, RLQK…AFLG, ALRW…TFPG, GLRV…TFED, FLEE…SFEG, QLEV…AFLG, NVAV…VFRG, KLHS…TFAG, GLRR…SLWG, ELLE…LFQG, KLEY…ALGP, RAFW…LLAS, and RLRY…PPGL. A glycan (N-linked (GlcNAc...) asparagine) is linked at Asn-368. Asn-515 is a glycosylation site (N-linked (GlcNAc...) asparagine). The 70-residue stretch at 536-605 folds into the LRRCT domain; sequence NPWDCSCPLK…DLGEAHFAPC (70 aa). 3 disulfide bridges follow: Cys-540–Cys-583, Cys-542–Cys-605, and Cys-566–Cys-571. Residue Asn-580 is glycosylated (N-linked (GlcNAc...) asparagine).

Forms a ternary complex with IGF1 and IGFBP3.

Its subcellular location is the secreted. The protein localises to the extracellular space. In terms of biological role, involved in protein-protein interactions that result in protein complexes, receptor-ligand binding or cell adhesion. The protein is Insulin-like growth factor-binding protein complex acid labile subunit (IGFALS) of Papio hamadryas (Hamadryas baboon).